A 145-amino-acid polypeptide reads, in one-letter code: Protoporphyrinogen IX oxidase (145 aa).

4 helical membrane-spanning segments follow: residues 6-26 (LWFKSAHLISAICWMAGLLYL), 61-81 (AMISTFIFGLINAHIYGFVAL), 83-103 (TWFQFKMFAVLILVIFHGLLA), and 123-143 (IVNEIPAICMVIAVIMVIVKP). His-12 lines the heme pocket. Lys-88 is a binding site for heme.

Belongs to the HemJ family. As to quaternary structure, homodimer. It depends on heme b as a cofactor.

It localises to the cell membrane. It carries out the reaction protoporphyrinogen IX + 3 A = protoporphyrin IX + 3 AH2. It functions in the pathway porphyrin-containing compound metabolism; protoporphyrin-IX biosynthesis; protoporphyrin-IX from protoporphyrinogen-IX: step 1/1. Its function is as follows. Catalyzes the oxidation of protoporphyrinogen IX to protoporphyrin IX. Is involved in the biosynthesis of tetrapyrrole molecules like heme. Does not use oxygen or artificial electron acceptors such as menadione or benzoquinone. The polypeptide is Protoporphyrinogen IX oxidase (Rickettsia prowazekii (strain Madrid E)).